Here is a 128-residue protein sequence, read N- to C-terminus: MRFAIVVTGPAYGTQQASSAFQFAQALIAEGHKLSSVFFYREGVYNANQLTSPASDEFDLVRGWQQLNAQHGVALNICVAAALRRGVVDETEAGRLGLASSNLQQGFTLSGLGALAEASLTCDRVVQF.

Cysteine 78 (cysteine persulfide intermediate) is an active-site residue.

Belongs to the DsrE/TusD family. Heterohexamer, formed by a dimer of trimers. The hexameric TusBCD complex contains 2 copies each of TusB, TusC and TusD. The TusBCD complex interacts with TusE.

The protein localises to the cytoplasm. In terms of biological role, part of a sulfur-relay system required for 2-thiolation of 5-methylaminomethyl-2-thiouridine (mnm(5)s(2)U) at tRNA wobble positions. Accepts sulfur from TusA and transfers it in turn to TusE. This chain is Sulfurtransferase TusD, found in Shigella dysenteriae serotype 1 (strain Sd197).